Consider the following 275-residue polypeptide: Formamidopyrimidine-DNA glycosylase (275 aa).

Proline 2 serves as the catalytic Schiff-base intermediate with DNA. Residue glutamate 3 is the Proton donor of the active site. The active-site Proton donor; for beta-elimination activity is lysine 59. DNA is bound by residues histidine 92, arginine 111, and lysine 155. Residues 240 to 274 (YVYGQTGEPCRRCGHEIEKMKLGGRGTHYCPHCQQ) form an FPG-type zinc finger. Arginine 264 (proton donor; for delta-elimination activity) is an active-site residue.

This sequence belongs to the FPG family. In terms of assembly, monomer. Requires Zn(2+) as cofactor.

It carries out the reaction Hydrolysis of DNA containing ring-opened 7-methylguanine residues, releasing 2,6-diamino-4-hydroxy-5-(N-methyl)formamidopyrimidine.. The enzyme catalyses 2'-deoxyribonucleotide-(2'-deoxyribose 5'-phosphate)-2'-deoxyribonucleotide-DNA = a 3'-end 2'-deoxyribonucleotide-(2,3-dehydro-2,3-deoxyribose 5'-phosphate)-DNA + a 5'-end 5'-phospho-2'-deoxyribonucleoside-DNA + H(+). Involved in base excision repair of DNA damaged by oxidation or by mutagenic agents. Acts as a DNA glycosylase that recognizes and removes damaged bases. Has a preference for oxidized purines, such as 7,8-dihydro-8-oxoguanine (8-oxoG). Has AP (apurinic/apyrimidinic) lyase activity and introduces nicks in the DNA strand. Cleaves the DNA backbone by beta-delta elimination to generate a single-strand break at the site of the removed base with both 3'- and 5'-phosphates. The sequence is that of Formamidopyrimidine-DNA glycosylase from Exiguobacterium sp. (strain ATCC BAA-1283 / AT1b).